A 95-amino-acid chain; its full sequence is Opiscorpine-2 (95 aa).

The first 19 residues, 1–19 (MNNKLTALIFHGLLAIASC), serve as a signal peptide directing secretion. The 41-residue stretch at 55–95 (EFMCMANMDPTGSCETHCQKASGEKGYCHGTKCKCGVPLSY) folds into the BetaSPN-type CS-alpha/beta domain. 3 disulfide bridges follow: Cys-58–Cys-82, Cys-68–Cys-87, and Cys-72–Cys-89.

Belongs to the long chain scorpion toxin family. Class 3 subfamily. In terms of tissue distribution, expressed by the venom gland.

The protein localises to the secreted. Functionally, has antimicrobial activity against yeasts and bacteria. The polypeptide is Opiscorpine-2 (Opistophthalmus carinatus (African yellow leg scorpion)).